Consider the following 255-residue polypeptide: Leucyl/phenylalanyl-tRNA--protein transferase (255 aa).

This sequence belongs to the L/F-transferase family.

It localises to the cytoplasm. The catalysed reaction is N-terminal L-lysyl-[protein] + L-leucyl-tRNA(Leu) = N-terminal L-leucyl-L-lysyl-[protein] + tRNA(Leu) + H(+). It catalyses the reaction N-terminal L-arginyl-[protein] + L-leucyl-tRNA(Leu) = N-terminal L-leucyl-L-arginyl-[protein] + tRNA(Leu) + H(+). The enzyme catalyses L-phenylalanyl-tRNA(Phe) + an N-terminal L-alpha-aminoacyl-[protein] = an N-terminal L-phenylalanyl-L-alpha-aminoacyl-[protein] + tRNA(Phe). Functions in the N-end rule pathway of protein degradation where it conjugates Leu, Phe and, less efficiently, Met from aminoacyl-tRNAs to the N-termini of proteins containing an N-terminal arginine or lysine. The polypeptide is Leucyl/phenylalanyl-tRNA--protein transferase (Polaromonas sp. (strain JS666 / ATCC BAA-500)).